The chain runs to 303 residues: Growth/differentiation factor 15 (303 aa).

The signal sequence occupies residues 1–30 (MAPPALQAQPPGGSQLRFLLFLLLLLLLLS). Positions 31–188 (WPSQGDALAM…LRVAAGRGRR (158 aa)) are excised as a propeptide. Asn-71 carries N-linked (GlcNAc...) asparagine glycosylation. Intrachain disulfides connect Cys-198–Cys-205, Cys-206–Cys-269, Cys-235–Cys-300, and Cys-239–Cys-302.

Belongs to the TGF-beta family. Homodimer; disulfide-linked. Interacts with GFRAL and RET; ligand of GFRAL, which mediates GDF15 internalization and cellular signaling through interaction with RET via the formation of a 2:2:2 ternary complex composed of GDF15, GFRAL and RET. In terms of tissue distribution, detected in plasma (at protein level). Highly expressed in liver. Expressed in the distal small intestine, colon and kidney. Expressed in skeletal muscle in response to mitochondrial stress. Expressed by cardiomyocytes, expression is highly increased in heart diseases. Also detected in subcutaneous fat.

The protein localises to the secreted. Its function is as follows. Hormone produced in response to various stresses to confer information about those stresses to the brain, and trigger an aversive response, characterized by nausea and/or loss of appetite. The aversive response is both required to reduce continuing exposure to those stresses at the time of exposure and to promote avoidance behavior in the future. Acts by binding to its receptor, GFRAL, activating GFRAL-expressing neurons localized in the area postrema and nucleus tractus solitarius of the brainstem. It then triggers the activation of neurons localized within the parabrachial nucleus and central amygdala, which constitutes part of the 'emergency circuit' that shapes responses to stressful conditions. The GDF15-GFRAL signal induces expression of genes involved in metabolism, such as lipid metabolism in adipose tissues. Required for avoidance behavior in response to food allergens: induced downstream of mast cell activation to promote aversion and minimize harmful effects of exposure to noxious substances. In addition to suppress appetite, also promotes weight loss by enhancing energy expenditure in muscle: acts by increasing calcium futile cycling in muscle. Contributes to the effect of metformin, an anti-diabetic drug, on appetite reduction and weight loss: produced in the kidney in response to metformin treatment, thereby activating the GDF15-GFRAL response, leading to reduced appetite and weight. Produced in response to anticancer drugs, such as camptothecin or cisplatin, promoting nausea and contributing to malnutrition. Overproduced in many cancers, promoting anorexia in cancer (cachexia). Responsible for the risk of nausea during pregnancy: high levels of GDF15 during pregnancy, mostly originating from embryos, are associated with increased nausea. Maternal sensitivity to nausea is probably determined by pre-pregnancy exposure to GDF15, females with naturally high level of GDF15 being less susceptible to nausea than female mice with low levels of GDF15 before pregnancy. Promotes metabolic adaptation in response to systemic inflammation caused by bacterial and viral infections in order to promote tissue tolerance and prevent tissue damage. Required for tissue tolerance in response to myocardial infarction by acting as an inhibitor of leukocyte integring activation, thereby protecting against cardiac rupture. Inhibits growth hormone signaling on hepatocytes. The chain is Growth/differentiation factor 15 from Mus musculus (Mouse).